The primary structure comprises 419 residues: Multifunctional CCA protein (419 aa).

2 residues coordinate ATP: Gly-8 and Arg-11. Gly-8 and Arg-11 together coordinate CTP. Positions 21 and 23 each coordinate Mg(2+). 3 residues coordinate ATP: Arg-91, Arg-141, and Arg-144. 3 residues coordinate CTP: Arg-91, Arg-141, and Arg-144. Positions 230 to 331 (TGVHVMMVLD…VRLLERCDAL (102 aa)) constitute an HD domain.

This sequence belongs to the tRNA nucleotidyltransferase/poly(A) polymerase family. Bacterial CCA-adding enzyme type 1 subfamily. As to quaternary structure, monomer. Can also form homodimers and oligomers. It depends on Mg(2+) as a cofactor. The cofactor is Ni(2+).

The catalysed reaction is a tRNA precursor + 2 CTP + ATP = a tRNA with a 3' CCA end + 3 diphosphate. The enzyme catalyses a tRNA with a 3' CCA end + 2 CTP + ATP = a tRNA with a 3' CCACCA end + 3 diphosphate. Catalyzes the addition and repair of the essential 3'-terminal CCA sequence in tRNAs without using a nucleic acid template. Adds these three nucleotides in the order of C, C, and A to the tRNA nucleotide-73, using CTP and ATP as substrates and producing inorganic pyrophosphate. tRNA 3'-terminal CCA addition is required both for tRNA processing and repair. Also involved in tRNA surveillance by mediating tandem CCA addition to generate a CCACCA at the 3' terminus of unstable tRNAs. While stable tRNAs receive only 3'-terminal CCA, unstable tRNAs are marked with CCACCA and rapidly degraded. This is Multifunctional CCA protein from Paracidovorax citrulli (strain AAC00-1) (Acidovorax citrulli).